Consider the following 346-residue polypeptide: S-adenosylmethionine:tRNA ribosyltransferase-isomerase (346 aa).

Belongs to the QueA family. Monomer.

It is found in the cytoplasm. The enzyme catalyses 7-aminomethyl-7-carbaguanosine(34) in tRNA + S-adenosyl-L-methionine = epoxyqueuosine(34) in tRNA + adenine + L-methionine + 2 H(+). The protein operates within tRNA modification; tRNA-queuosine biosynthesis. In terms of biological role, transfers and isomerizes the ribose moiety from AdoMet to the 7-aminomethyl group of 7-deazaguanine (preQ1-tRNA) to give epoxyqueuosine (oQ-tRNA). The protein is S-adenosylmethionine:tRNA ribosyltransferase-isomerase of Neisseria meningitidis serogroup C (strain 053442).